The following is a 654-amino-acid chain: Probable Xaa-Pro aminopeptidase P (654 aa).

Residues Asp-449, Asp-460, Glu-558, and Glu-572 each coordinate Mn(2+).

It belongs to the peptidase M24B family. Requires Mn(2+) as cofactor.

It carries out the reaction Release of any N-terminal amino acid, including proline, that is linked to proline, even from a dipeptide or tripeptide.. Catalyzes the removal of a penultimate prolyl residue from the N-termini of peptides. This Aspergillus fumigatus (strain CBS 144.89 / FGSC A1163 / CEA10) (Neosartorya fumigata) protein is Probable Xaa-Pro aminopeptidase P (ampp).